The primary structure comprises 391 residues: Histamine H4 receptor (391 aa).

The Extracellular segment spans residues 1–19 (MSESNSTGILPPAAQVPLA). An N-linked (GlcNAc...) asparagine glycan is attached at asparagine 5. The chain crosses the membrane as a helical span at residues 20–40 (FLMSSFAFAIMVGNAVVILAF). At 41–52 (VVDRNLRHRSNY) the chain is on the cytoplasmic side. The chain crosses the membrane as a helical span at residues 53 to 73 (FFLNLAISDFLVGLISIPLYI). Over 74 to 87 (PHVLFNWNFGSGIC) the chain is Extracellular. Cysteines 87 and 166 form a disulfide. A helical membrane pass occupies residues 88–108 (MFWLITDYLLCTASVYNIVLI). At 109 to 131 (SYDRYQSVSNAVSYRAQHTGIMK) the chain is on the cytoplasmic side. The helical transmembrane segment at 132–152 (IVAQMVAVWILAFLVNGPMIL) threads the bilayer. The Extracellular portion of the chain corresponds to 153–174 (ASDSWKNSTNTKDCEPGFVTEW). N-linked (GlcNAc...) asparagine glycosylation occurs at asparagine 159. The chain crosses the membrane as a helical span at residues 175 to 195 (YILTITMLLEFLLPVISVAYF). The Cytoplasmic segment spans residues 196–306 (NVQIYWSLWK…LLRGRKLARS (111 aa)). Positions 238 to 258 (TSNPGLKESAASRHSESPRRK) are disordered. Basic and acidic residues predominate over residues 247-256 (AASRHSESPR). Residues 307–327 (LAILLSAFAICWAPYCLFTIV) traverse the membrane as a helical segment. Over 328–343 (LSTYPRTERPKSVWYS) the chain is Extracellular. The chain crosses the membrane as a helical span at residues 344–364 (IAFWLQWFNSFVNPFLYPLCH). Residues 365–391 (RRFQKAFWKILCVTKQPALSQNQSVSS) lie on the Cytoplasmic side of the membrane.

It belongs to the G-protein coupled receptor 1 family. Interacts with TSPAN4.

The protein resides in the cell membrane. Functionally, the H4 subclass of histamine receptors could mediate the histamine signals in peripheral tissues. Displays a significant level of constitutive activity (spontaneous activity in the absence of agonist). The protein is Histamine H4 receptor (Hrh4) of Mus musculus (Mouse).